The chain runs to 129 residues: Small ribosomal subunit protein uS11 (129 aa).

This sequence belongs to the universal ribosomal protein uS11 family. As to quaternary structure, part of the 30S ribosomal subunit. Interacts with proteins S7 and S18. Binds to IF-3.

Its function is as follows. Located on the platform of the 30S subunit, it bridges several disparate RNA helices of the 16S rRNA. Forms part of the Shine-Dalgarno cleft in the 70S ribosome. In Lactobacillus delbrueckii subsp. bulgaricus (strain ATCC 11842 / DSM 20081 / BCRC 10696 / JCM 1002 / NBRC 13953 / NCIMB 11778 / NCTC 12712 / WDCM 00102 / Lb 14), this protein is Small ribosomal subunit protein uS11.